We begin with the raw amino-acid sequence, 190 residues long: Small ribosomal subunit protein eS7 (190 aa).

The protein belongs to the eukaryotic ribosomal protein eS7 family.

This Avicennia marina (Grey mangrove) protein is Small ribosomal subunit protein eS7 (RPS7).